We begin with the raw amino-acid sequence, 119 residues long: Aspartate 1-decarboxylase (119 aa).

Serine 25 serves as the catalytic Schiff-base intermediate with substrate; via pyruvic acid. Position 25 is a pyruvic acid (Ser) (serine 25). Threonine 57 serves as a coordination point for substrate. The Proton donor role is filled by tyrosine 58. 73 to 75 (GAA) contacts substrate.

The protein belongs to the PanD family. Heterooctamer of four alpha and four beta subunits. Pyruvate serves as cofactor. Is synthesized initially as an inactive proenzyme, which is activated by self-cleavage at a specific serine bond to produce a beta-subunit with a hydroxyl group at its C-terminus and an alpha-subunit with a pyruvoyl group at its N-terminus.

The protein localises to the cytoplasm. It catalyses the reaction L-aspartate + H(+) = beta-alanine + CO2. It participates in cofactor biosynthesis; (R)-pantothenate biosynthesis; beta-alanine from L-aspartate: step 1/1. Catalyzes the pyruvoyl-dependent decarboxylation of aspartate to produce beta-alanine. The chain is Aspartate 1-decarboxylase from Herminiimonas arsenicoxydans.